Consider the following 164-residue polypeptide: Phosphopantetheine adenylyltransferase (164 aa).

S9 is a substrate binding site. Residues 9–10 and H17 each bind ATP; that span reads SF. Substrate contacts are provided by K41, L73, and K87. ATP is bound by residues 88–90, E98, and 123–129; these read GLR and NSFLSSS.

The protein belongs to the bacterial CoaD family. Homohexamer. Mg(2+) is required as a cofactor.

The protein resides in the cytoplasm. It carries out the reaction (R)-4'-phosphopantetheine + ATP + H(+) = 3'-dephospho-CoA + diphosphate. It participates in cofactor biosynthesis; coenzyme A biosynthesis; CoA from (R)-pantothenate: step 4/5. In terms of biological role, reversibly transfers an adenylyl group from ATP to 4'-phosphopantetheine, yielding dephospho-CoA (dPCoA) and pyrophosphate. The sequence is that of Phosphopantetheine adenylyltransferase from Clostridium kluyveri (strain ATCC 8527 / DSM 555 / NBRC 12016 / NCIMB 10680 / K1).